Reading from the N-terminus, the 120-residue chain is Ribonuclease P protein component (120 aa).

It belongs to the RnpA family. As to quaternary structure, consists of a catalytic RNA component (M1 or rnpB) and a protein subunit.

It carries out the reaction Endonucleolytic cleavage of RNA, removing 5'-extranucleotides from tRNA precursor.. In terms of biological role, RNaseP catalyzes the removal of the 5'-leader sequence from pre-tRNA to produce the mature 5'-terminus. It can also cleave other RNA substrates such as 4.5S RNA. The protein component plays an auxiliary but essential role in vivo by binding to the 5'-leader sequence and broadening the substrate specificity of the ribozyme. This chain is Ribonuclease P protein component, found in Azoarcus sp. (strain BH72).